Reading from the N-terminus, the 62-residue chain is Large ribosomal subunit protein uL29 (62 aa).

Belongs to the universal ribosomal protein uL29 family.

This is Large ribosomal subunit protein uL29 from Geobacter sulfurreducens (strain ATCC 51573 / DSM 12127 / PCA).